A 122-amino-acid polypeptide reads, in one-letter code: Large ribosomal subunit protein uL14 (122 aa).

It belongs to the universal ribosomal protein uL14 family. In terms of assembly, part of the 50S ribosomal subunit. Forms a cluster with proteins L3 and L19. In the 70S ribosome, L14 and L19 interact and together make contacts with the 16S rRNA in bridges B5 and B8.

In terms of biological role, binds to 23S rRNA. Forms part of two intersubunit bridges in the 70S ribosome. The protein is Large ribosomal subunit protein uL14 of Pseudomonas savastanoi pv. phaseolicola (strain 1448A / Race 6) (Pseudomonas syringae pv. phaseolicola (strain 1448A / Race 6)).